Consider the following 516-residue polypeptide: Glucose-1-phosphate adenylyltransferase large subunit 1, chloroplastic/amyloplastic (516 aa).

Residues 1-45 (MQFALALDTNSGPHQIRSCEGDGIDRLEKLSIGGRKQEKALRNRC) constitute a chloroplast transit peptide.

The protein belongs to the bacterial/plant glucose-1-phosphate adenylyltransferase family. In terms of assembly, heterotetramer. As to expression, endosperm.

Its subcellular location is the plastid. The protein localises to the chloroplast. The protein resides in the amyloplast. The enzyme catalyses alpha-D-glucose 1-phosphate + ATP + H(+) = ADP-alpha-D-glucose + diphosphate. Its pathway is glycan biosynthesis; starch biosynthesis. With respect to regulation, activated by 3'phosphoglycerate, inhibited by orthophosphate. Allosteric regulation. Its function is as follows. This protein plays a role in synthesis of starch. It catalyzes the synthesis of the activated glycosyl donor, ADP-glucose from Glc-1-P and ATP. This is Glucose-1-phosphate adenylyltransferase large subunit 1, chloroplastic/amyloplastic (SH2) from Zea mays (Maize).